The chain runs to 541 residues: Putative transferase YhbX (541 aa).

The Periplasmic portion of the chain corresponds to 1 to 60; the sequence is MTVFNKFARTFKSHWLLYLCVIVFGITNLVASSGAHMVQRLLFFVLTILVVKRISSLPLR. A helical transmembrane segment spans residues 61 to 81; that stretch reads LLVAAPFVLLTAADMSISLYS. The Cytoplasmic segment spans residues 82–110; it reads WCTFGTTFNDGFAISVLQSDPDEVVKMLG. The chain crosses the membrane as a helical span at residues 111–131; sequence MYIPYLCAFAFLSLLFLAVII. Over 132 to 141 the chain is Periplasmic; it reads KYDVSLPTKK. The helical transmembrane segment at 142–162 threads the bilayer; sequence VTGILLLIVISGSLFSACQFA. The Cytoplasmic portion of the chain corresponds to 163–264; the sequence is YKDAKNKKAF…RKQIKLFNQA (102 aa). The helical transmembrane segment at 265–285 threads the bilayer; sequence ISGAPYTALSVPLSLTADSVL. The Periplasmic portion of the chain corresponds to 286 to 541; that stretch reads SHDIHNYPDN…QGNPTPEGQG (256 aa).

The protein belongs to the phosphoethanolamine transferase family.

The protein resides in the cell inner membrane. In terms of biological role, probably does not transfer phosphoethanolamine to lipid A. This is Putative transferase YhbX (yhbX) from Escherichia coli (strain K12).